A 184-amino-acid polypeptide reads, in one-letter code: Ribosome-recycling factor (184 aa).

Belongs to the RRF family.

It localises to the cytoplasm. Responsible for the release of ribosomes from messenger RNA at the termination of protein biosynthesis. May increase the efficiency of translation by recycling ribosomes from one round of translation to another. In Acinetobacter baumannii (strain AB307-0294), this protein is Ribosome-recycling factor.